We begin with the raw amino-acid sequence, 469 residues long: Adenosylhomocysteinase (469 aa).

Positions 63, 139, and 164 each coordinate substrate. An NAD(+)-binding site is contributed by T165 to T167. 2 residues coordinate substrate: K194 and D198. NAD(+) is bound by residues N199, G228–G233, E251, N300, I321–H323, and N375.

The protein belongs to the adenosylhomocysteinase family. NAD(+) serves as cofactor.

Its subcellular location is the cytoplasm. It carries out the reaction S-adenosyl-L-homocysteine + H2O = L-homocysteine + adenosine. The protein operates within amino-acid biosynthesis; L-homocysteine biosynthesis; L-homocysteine from S-adenosyl-L-homocysteine: step 1/1. Functionally, may play a key role in the regulation of the intracellular concentration of adenosylhomocysteine. This is Adenosylhomocysteinase from Pseudomonas putida (strain ATCC 700007 / DSM 6899 / JCM 31910 / BCRC 17059 / LMG 24140 / F1).